Consider the following 420-residue polypeptide: Ketoreductase sphF (420 aa).

Residues M1–G21 form a disordered region. A helical membrane pass occupies residues W29–W49. The tract at residues R275–D298 is disordered.

The protein localises to the membrane. The enzyme catalyses 3-oxopresphingofungin + NADPH + 2 H(+) = presphingofungin + NADP(+). The protein operates within secondary metabolite biosynthesis. Ketoreductase; part of the gene cluster that mediates the biosynthesis of sphingofungins, bioactive molecules acting as sphingolipid inhibitors via inhibiting serine palmitoyl transferase (SPT). Within the pathway, sphF catalyzes the reduction of the C-3 ketone of 3-keto-presphingofungin to produce presphingofungin. Sphingofungin biosynthesis starts with the PKS sphB that produces an C18 polyketide precursor 3-hydroxyoctadeca-4,10-dienoyl-ACP containing one delta-6 desaturation and one delta-12 desaturation. The aminoacyl transferase sphA uses the sphB product to produce 3-keto-presphingofungin by adding an aminomalonate molecule. SphF then reduces the C-3 ketone of 3-keto-presphingofungin which leads to presphingofungin. The cytochrome P450 monooxygenase sphH converts presphingofungin into sphingofungin B1 which is further converted to sphingofungin B by the dioxygenase sphC. SphC is also able to convert presphingofungin into sphingofungin B2. The acetyltransferase sphE acetylates sphingofungin B to produce sphingofungin C, but can also convert sphingofungin B1 into sphingofungin C1 and sphingofungin B2 into sphingofungin C2. Finally, sphingofungin C can be spontaneously converted into sphingofungin D. The protein is Ketoreductase sphF of Aspergillus fumigatus (strain CBS 144.89 / FGSC A1163 / CEA10) (Neosartorya fumigata).